The primary structure comprises 158 residues: uncharacterized protein (158 aa).

The N-terminal stretch at 1 to 16 (MFRPILILTILSCVLA) is a signal peptide. A glycan (N-linked (GlcNAc...) asparagine) is linked at Asn122.

This is an uncharacterized protein from Caenorhabditis elegans.